The primary structure comprises 163 residues: Phosphopantetheine adenylyltransferase (163 aa).

Residue T10 participates in substrate binding. ATP contacts are provided by residues 10-11 (TF) and H18. Residues K42, L74, and R88 each contribute to the substrate site. Residues 89-91 (GLR), E99, and 124-130 (NSFISST) contribute to the ATP site.

Belongs to the bacterial CoaD family. In terms of assembly, homohexamer. Mg(2+) is required as a cofactor.

It is found in the cytoplasm. It catalyses the reaction (R)-4'-phosphopantetheine + ATP + H(+) = 3'-dephospho-CoA + diphosphate. Its pathway is cofactor biosynthesis; coenzyme A biosynthesis; CoA from (R)-pantothenate: step 4/5. Reversibly transfers an adenylyl group from ATP to 4'-phosphopantetheine, yielding dephospho-CoA (dPCoA) and pyrophosphate. In Shewanella sp. (strain MR-4), this protein is Phosphopantetheine adenylyltransferase.